Here is a 472-residue protein sequence, read N- to C-terminus: MRNRRIRILFTVIVFVFALLGLILPLSGNVNDISILRFFPNINLGLDIQGGVLLEYSFDVPEGVNTSEVVDNVITVLRRRMDNAGYTEAIVSEVVSGGESRVRVEIPGISDTQRAEELIGSKGKLYFAEVLEVVESTTTPEITRNRTIQINGEEIEMYSYVKDSNNPNLWYRVKNVFEFGDAPFQITGLDVTDAVASLNSQGAGFVVNLNFSNEGRQKFELATANLVNERIAIILDDEVIIAPVVRERISQGRAEISGIESMEEAQNIAVLIKSGNLPVDLVKYQERTLGPTLGRDIVTTIINAGIIGLIIVMIYMIIFYRWMGVIADIALIYNTFLLMGILSWTGAILTLPGIAGIILTFGTTVDGNIIIYERIKEELRIGRPPLTAVKFGFNKVFSTIFDANITTILAGLVLFFVTSGSIRGFAVTLIIGVLGAMFTNLVVSRLLLESTSHFLKPEKYVKGIVVEKGGTK.

The next 6 helical transmembrane spans lie at 8-28 (ILFT…PLSG), 300-320 (TIIN…IIFY), 325-347 (VIAD…WTGA), 353-375 (GIAG…YERI), 396-416 (VFST…VLFF), and 424-444 (GFAV…LVVS).

The protein belongs to the SecD/SecF family. SecD subfamily. In terms of assembly, forms a complex with SecF. Part of the essential Sec protein translocation apparatus which comprises SecA, SecYEG and auxiliary proteins SecDF. Other proteins may also be involved.

It is found in the cell inner membrane. Functionally, part of the Sec protein translocase complex. Interacts with the SecYEG preprotein conducting channel. SecDF uses the proton motive force (PMF) to complete protein translocation after the ATP-dependent function of SecA. The polypeptide is Protein translocase subunit SecD (Petrotoga mobilis (strain DSM 10674 / SJ95)).